A 298-amino-acid polypeptide reads, in one-letter code: Ribosomal RNA small subunit methyltransferase A (298 aa).

The S-adenosyl-L-methionine site is built by N30, V32, G57, E78, D108, and N126.

Belongs to the class I-like SAM-binding methyltransferase superfamily. rRNA adenine N(6)-methyltransferase family. RsmA subfamily.

It is found in the cytoplasm. The enzyme catalyses adenosine(1518)/adenosine(1519) in 16S rRNA + 4 S-adenosyl-L-methionine = N(6)-dimethyladenosine(1518)/N(6)-dimethyladenosine(1519) in 16S rRNA + 4 S-adenosyl-L-homocysteine + 4 H(+). Functionally, specifically dimethylates two adjacent adenosines (A1518 and A1519) in the loop of a conserved hairpin near the 3'-end of 16S rRNA in the 30S particle. May play a critical role in biogenesis of 30S subunits. This chain is Ribosomal RNA small subunit methyltransferase A, found in Cutibacterium acnes (strain DSM 16379 / KPA171202) (Propionibacterium acnes).